A 216-amino-acid polypeptide reads, in one-letter code: Phosphatidylserine decarboxylase proenzyme (216 aa).

Ser183 (schiff-base intermediate with substrate; via pyruvic acid) is an active-site residue. A Pyruvic acid (Ser); by autocatalysis modification is found at Ser183.

It belongs to the phosphatidylserine decarboxylase family. PSD-A subfamily. Heterodimer of a large membrane-associated beta subunit and a small pyruvoyl-containing alpha subunit. Pyruvate serves as cofactor. In terms of processing, is synthesized initially as an inactive proenzyme. Formation of the active enzyme involves a self-maturation process in which the active site pyruvoyl group is generated from an internal serine residue via an autocatalytic post-translational modification. Two non-identical subunits are generated from the proenzyme in this reaction, and the pyruvate is formed at the N-terminus of the alpha chain, which is derived from the carboxyl end of the proenzyme. The post-translation cleavage follows an unusual pathway, termed non-hydrolytic serinolysis, in which the side chain hydroxyl group of the serine supplies its oxygen atom to form the C-terminus of the beta chain, while the remainder of the serine residue undergoes an oxidative deamination to produce ammonia and the pyruvoyl prosthetic group on the alpha chain.

The protein resides in the cell membrane. It carries out the reaction a 1,2-diacyl-sn-glycero-3-phospho-L-serine + H(+) = a 1,2-diacyl-sn-glycero-3-phosphoethanolamine + CO2. It functions in the pathway phospholipid metabolism; phosphatidylethanolamine biosynthesis; phosphatidylethanolamine from CDP-diacylglycerol: step 2/2. Its function is as follows. Catalyzes the formation of phosphatidylethanolamine (PtdEtn) from phosphatidylserine (PtdSer). The protein is Phosphatidylserine decarboxylase proenzyme of Cupriavidus taiwanensis (strain DSM 17343 / BCRC 17206 / CCUG 44338 / CIP 107171 / LMG 19424 / R1) (Ralstonia taiwanensis (strain LMG 19424)).